A 432-amino-acid chain; its full sequence is MEGCCMQLPTNVSSLRGTIEVPGDKSISHRAVMLGALASGRTVIDHFLPGADCLSTIDCFRKLGVDIHQDGTNVIVEGAGSGGLREPAAVLDVGNSGTTARLLLGILAGQPFHACLVGDESIAQRPMARVTKPLREMGAHIDGRDDGNYTPLAIRGGALRPLRYTSPVASAQVKSAILLAGLFTDGVTSVTEPHRSRDHTERMIRLFGGEVNVDGLTVSIAGPQSLRGTHIYVPGDISSAAFFLVAGAIVPNSEITLKNVGLNPTRTGIIDVLERMGADITIDHIRNEETEPIGDITIRTSTLHAIEIGGDIIPRLIDEIPIIALLATQAEGTTIIKDASELKVKETNRIDTVVAELKKFGADIEATDDGMIIRGKTALYADGIVVDSHGDHRIGMMLAIAACCAKGTARLERPEAVAVSYPAFFADLRSLL.

Residues lysine 25, serine 26, and arginine 30 each contribute to the 3-phosphoshikimate site. A phosphoenolpyruvate-binding site is contributed by lysine 25. 2 residues coordinate phosphoenolpyruvate: glycine 97 and arginine 125. Residues serine 170, glutamine 172, aspartate 318, and lysine 345 each contribute to the 3-phosphoshikimate site. Glutamine 172 is a binding site for phosphoenolpyruvate. Aspartate 318 acts as the Proton acceptor in catalysis. 2 residues coordinate phosphoenolpyruvate: arginine 349 and arginine 393.

The protein belongs to the EPSP synthase family. Monomer.

The protein localises to the cytoplasm. The enzyme catalyses 3-phosphoshikimate + phosphoenolpyruvate = 5-O-(1-carboxyvinyl)-3-phosphoshikimate + phosphate. Its pathway is metabolic intermediate biosynthesis; chorismate biosynthesis; chorismate from D-erythrose 4-phosphate and phosphoenolpyruvate: step 6/7. In terms of biological role, catalyzes the transfer of the enolpyruvyl moiety of phosphoenolpyruvate (PEP) to the 5-hydroxyl of shikimate-3-phosphate (S3P) to produce enolpyruvyl shikimate-3-phosphate and inorganic phosphate. In Geobacillus thermodenitrificans (strain NG80-2), this protein is 3-phosphoshikimate 1-carboxyvinyltransferase.